We begin with the raw amino-acid sequence, 179 residues long: Peptidyl-tRNA hydrolase (179 aa).

Tyrosine 15 contacts tRNA. Histidine 20 (proton acceptor) is an active-site residue. Positions 66, 68, and 114 each coordinate tRNA.

This sequence belongs to the PTH family. As to quaternary structure, monomer.

The protein localises to the cytoplasm. It carries out the reaction an N-acyl-L-alpha-aminoacyl-tRNA + H2O = an N-acyl-L-amino acid + a tRNA + H(+). In terms of biological role, hydrolyzes ribosome-free peptidyl-tRNAs (with 1 or more amino acids incorporated), which drop off the ribosome during protein synthesis, or as a result of ribosome stalling. Its function is as follows. Catalyzes the release of premature peptidyl moieties from peptidyl-tRNA molecules trapped in stalled 50S ribosomal subunits, and thus maintains levels of free tRNAs and 50S ribosomes. This Chlamydia trachomatis serovar L2b (strain UCH-1/proctitis) protein is Peptidyl-tRNA hydrolase.